A 345-amino-acid polypeptide reads, in one-letter code: Dihydroorotate dehydrogenase (quinone) (345 aa).

FMN-binding positions include 65 to 69 (AGLDK) and threonine 89. Substrate is bound at residue lysine 69. A substrate-binding site is contributed by 114–118 (NRMGF). Residues asparagine 142 and asparagine 175 each contribute to the FMN site. Asparagine 175 is a binding site for substrate. Serine 178 functions as the Nucleophile in the catalytic mechanism. A substrate-binding site is contributed by asparagine 180. Positions 220 and 248 each coordinate FMN. 249–250 (NT) is a binding site for substrate. FMN is bound by residues glycine 271, glycine 300, and 321 to 322 (YT).

The protein belongs to the dihydroorotate dehydrogenase family. Type 2 subfamily. As to quaternary structure, monomer. It depends on FMN as a cofactor.

The protein localises to the cell membrane. It carries out the reaction (S)-dihydroorotate + a quinone = orotate + a quinol. Its pathway is pyrimidine metabolism; UMP biosynthesis via de novo pathway; orotate from (S)-dihydroorotate (quinone route): step 1/1. In terms of biological role, catalyzes the conversion of dihydroorotate to orotate with quinone as electron acceptor. In Burkholderia cenocepacia (strain HI2424), this protein is Dihydroorotate dehydrogenase (quinone).